The primary structure comprises 248 residues: Ureidoacrylate amidohydrolase RutB (248 aa).

Catalysis depends on D41, which acts as the Proton acceptor. K150 is an active-site residue. C183 serves as the catalytic Nucleophile.

This sequence belongs to the isochorismatase family. RutB subfamily.

It carries out the reaction (Z)-3-ureidoacrylate + H2O + H(+) = (Z)-3-aminoacrylate + NH4(+) + CO2. It catalyses the reaction (Z)-3-ureidoacrylate + H2O = (Z)-3-aminoacrylate + carbamate + H(+). The catalysed reaction is (Z)-2-methylureidoacrylate + H2O + H(+) = (Z)-2-methylaminoacrylate + NH4(+) + CO2. Functionally, hydrolyzes ureidoacrylate to form aminoacrylate and carbamate. The carbamate hydrolyzes spontaneously, thereby releasing one of the nitrogen atoms of the pyrimidine ring as ammonia and one of its carbon atoms as CO2. This chain is Ureidoacrylate amidohydrolase RutB, found in Stutzerimonas stutzeri (strain A1501) (Pseudomonas stutzeri).